Here is a 243-residue protein sequence, read N- to C-terminus: UPF0758 protein MAE_44350 (243 aa).

Positions 113–235 (VIDSPDTAAA…FQSLRQITDL (123 aa)) constitute an MPN domain. The Zn(2+) site is built by histidine 184, histidine 186, and aspartate 197. Positions 184-197 (HNHPTGSLVPSQDD) match the JAMM motif motif.

The protein belongs to the UPF0758 family.

The sequence is that of UPF0758 protein MAE_44350 from Microcystis aeruginosa (strain NIES-843 / IAM M-2473).